Reading from the N-terminus, the 1775-residue chain is Atrochrysone carboxylic acid synthase (1775 aa).

Residues L35 to F262 form the Starter acyltransferase (SAT) domain. The Ketosynthase family 3 (KS3) domain maps to D400 to E833. Catalysis depends on for beta-ketoacyl synthase activity residues C573, H708, and H750. A Malonyl-CoA:ACP transacylase (MAT) domain is found at F934–S1244. The product template (PT) domain stretch occupies residues T1313–P1631. The interval H1317–N1451 is N-terminal hotdog fold. One can recognise a PKS/mFAS DH domain in the interval H1317 to P1626. H1349 functions as the Proton acceptor; for dehydratase activity in the catalytic mechanism. The interval A1480 to P1626 is C-terminal hotdog fold. The active-site Proton donor; for dehydratase activity is D1537. Residues T1671–A1697 form a disordered region. The span at P1688–A1697 shows a compositional bias: low complexity. Positions A1697–F1774 constitute a Carrier domain. S1734 is modified (O-(pantetheine 4'-phosphoryl)serine).

It catalyses the reaction holo-[ACP] + 8 malonyl-CoA + 8 H(+) = atrochrysone carboxyl-[ACP] + 8 CO2 + 8 CoA + 2 H2O. Its pathway is secondary metabolite biosynthesis. Non-reducing polyketide synthase; part of the gene cluster that mediates the biosynthesis of physcion, a natural anthraquinone fungicide that can prevent plant fungal infections. The pathway begins with the polyketide synthase AcPKS that condenses 8 malonyl-CoA units to synthesize atrochrysone thioester which is released from the synthase by the atrochrysone carboxyl ACP thioesterase AcTE that breaks the thioester bond and leads to free atrochrysone carboxylic acid. Spontaneous decarboxylation of atrochrysone carboxylic acid leads to the formation of atrochrysone. Then, atrochrysone undergoes spontaneous dehydration and oxidation, giving the products emodin anthrone and emodin. The O-methyltransferase AcOMT then methylates the C-6 hydroxyl of emodin to form physcion. This chain is Atrochrysone carboxylic acid synthase, found in Aspergillus chevalieri (Eurotium chevalieri).